Here is a 1183-residue protein sequence, read N- to C-terminus: Polyphosphatidylinositol phosphatase INP52 (1183 aa).

Positions 133–153 (PPSISTHSSRSSLRSSSSRSL) are enriched in low complexity. The interval 133–161 (PPSISTHSSRSSLRSSSSRSLNAQEQAPK) is disordered. At serine 152 the chain carries Phosphoserine. The 341-residue stretch at 167 to 507 (LRKLLSNGSF…GDQISQIYTG (341 aa)) folds into the SAC domain. Serine 522 is subject to Phosphoserine. Positions 955 to 968 (SPLLSGPSPQPSVV) are enriched in low complexity. The tract at residues 955 to 1183 (SPLLSGPSPQ…VHPLKPCDPN (229 aa)) is disordered. Phosphoserine is present on residues serine 1005 and serine 1016. Threonine 1032 carries the post-translational modification Phosphothreonine. Polar residues-rich tracts occupy residues 1046–1057 (KPVSLQKSSSEL), 1082–1100 (STAP…VSTT), and 1130–1145 (KLNT…SPSN). Position 1095 is a phosphoserine (serine 1095).

Belongs to the synaptojanin family. It in the central section; belongs to the inositol 1,4,5-trisphosphate 5-phosphatase family. Interacts (via SAC domain) with BSP1; the interaction is direct. Interacts with ABP1.

It is found in the cytoplasm. The protein localises to the cytoskeleton. Its subcellular location is the actin patch. It catalyses the reaction a 1,2-diacyl-sn-glycero-3-phospho-(1D-myo-inositol-4,5-bisphosphate) + H2O = a 1,2-diacyl-sn-glycero-3-phospho-(1D-myo-inositol 4-phosphate) + phosphate. Functionally, dephosphorylates a number of phosphatidylinositols (PIs) like phosphatidylinositol 4,5-bisphosphate (PtdIns(4,5)P2), but also phosphatidylinositol 3-phosphate (PtdIns(3)P), phosphatidylinositol 4-phosphate (PtdIns(4)P), and phosphatidylinositol 3,5-bisphosphate (PtdIns(3,5)P2). Controls the cellular levels and subcellular distribution of phosphatidylinositol 3-phosphate and phosphatidylinositol 4,5-bisphosphate. Specifically functions within the early endocytic pathway and actin organization. This chain is Polyphosphatidylinositol phosphatase INP52, found in Saccharomyces cerevisiae (strain ATCC 204508 / S288c) (Baker's yeast).